The sequence spans 186 residues: Signal peptidase I (186 aa).

Over 1-19 (MTEEKSTNKKNSLFEWVKA) the chain is Cytoplasmic. Residues 20–40 (IIIAVVLALLIRAFLFEPYLV) form a helical membrane-spanning segment. The Extracellular segment spans residues 41–186 (EGTSMDPTLH…FPFNEIRKTD (146 aa)). Active-site residues include serine 44 and lysine 86.

Belongs to the peptidase S26 family.

It is found in the cell membrane. The catalysed reaction is Cleavage of hydrophobic, N-terminal signal or leader sequences from secreted and periplasmic proteins.. This Bacillus licheniformis protein is Signal peptidase I (lepB).